A 57-amino-acid polypeptide reads, in one-letter code: Aspartyl-phosphate phosphatase YnzD (57 aa).

This sequence belongs to the spo0E family.

Its function is as follows. Aspartyl-phosphate phosphatase which specifically dephosphorylates the sporulation transcription factor Spo0A-P and negatively regulates the sporulation initiation pathway in order to control the proper timing of sporulation. The polypeptide is Aspartyl-phosphate phosphatase YnzD (ynzD) (Bacillus subtilis (strain 168)).